Here is a 706-residue protein sequence, read N- to C-terminus: Transmembrane 9 superfamily member 3 (706 aa).

Positions 1–33 are cleaved as a signal peptide; it reads MRVRPKRSVITLMAIVVVMLILRNQFYSSRTRG. Residues 34–290 are Lumenal-facing; sequence HGQEPVISSS…LSDEQSIQFH (257 aa). A helical membrane pass occupies residues 291–311; the sequence is WMSLANSVGIVLSISFITLII. Topologically, residues 312-371 are cytoplasmic; that stretch reads YVRVMYTDKSNSKSPKYMINIEGIETEDDLDDDKYGKYSVYTVAKDWIQNGRPNLFGLKV. A helical membrane pass occupies residues 372-392; the sequence is LILLVSFGVQFLFTIIGSLTI. Topologically, residues 393-405 are lumenal; that stretch reads SCSMNKLHNVRNS. Residues 406-426 traverse the membrane as a helical segment; that stretch reads VLTMAILFFVLGAFMASFVGT. Topologically, residues 427 to 456 are cytoplasmic; the sequence is RLSMVTKTKRTKANYLDDNRYLKDYKKFSP. The helical transmembrane segment at 457–477 threads the bilayer; it reads IFTILCGSSLPGIVMVSTFLL. Residues 478–494 lie on the Lumenal side of the membrane; that stretch reads NSIVWAHDSTSALPFKT. Residues 495–515 traverse the membrane as a helical segment; that stretch reads IVFFMSIYFIVCIPLSLFGGI. Residues 516-553 are Cytoplasmic-facing; sequence VANNIPLPQYWLSGITKDESNSDGNGLFVPKSRAKFNP. A helical transmembrane segment spans residues 554–574; sequence LVYCGIYLCGIFPLLVIYVEM. Residues 575–592 lie on the Lumenal side of the membrane; sequence QYVYKSLWLEKTTFYYFY. The helical transmembrane segment at 593–613 threads the bilayer; it reads GFLFLSIILLCVLTMEISIIG. The Cytoplasmic portion of the chain corresponds to 614 to 637; the sequence is SYLLMRFCFEDKVVRNNWRWKCFE. The chain crosses the membrane as a helical span at residues 638-658; the sequence is MGFSGGVYMELYSLYYIFAVL. Residues 659–665 lie on the Lumenal side of the membrane; that stretch reads NIHGFSS. A helical membrane pass occupies residues 666 to 686; the sequence is ILISICYSLIFNVMCSLGLGA. Topologically, residues 687–706 are cytoplasmic; the sequence is LSYLTASWFINKIYHQKVNL.

This sequence belongs to the nonaspanin (TM9SF) (TC 9.A.2) family.

Its subcellular location is the golgi apparatus membrane. Functionally, with EMP70 and TMN2, plays a critical role in the late stages of a nutrient-controlled pathway notably regulating FLO11 gene expression. Acts downstream of RAS2 and TOR. Essential for cell adhesion and filamentous growth. May play a role as effector of cellular copper homeostasis. This Saccharomyces cerevisiae (strain ATCC 204508 / S288c) (Baker's yeast) protein is Transmembrane 9 superfamily member 3 (TMN3).